The chain runs to 179 residues: ATP-dependent protease subunit HslV (179 aa).

Thr6 is an active-site residue. Residues Ser164, Cys167, and Thr170 each contribute to the Na(+) site.

This sequence belongs to the peptidase T1B family. HslV subfamily. In terms of assembly, a double ring-shaped homohexamer of HslV is capped on each side by a ring-shaped HslU homohexamer. The assembly of the HslU/HslV complex is dependent on binding of ATP.

It localises to the cytoplasm. The catalysed reaction is ATP-dependent cleavage of peptide bonds with broad specificity.. Allosterically activated by HslU binding. Protease subunit of a proteasome-like degradation complex believed to be a general protein degrading machinery. The chain is ATP-dependent protease subunit HslV from Listeria monocytogenes serotype 4b (strain CLIP80459).